The chain runs to 418 residues: Serine protease inhibitor A3N (418 aa).

Positions 1–29 are cleaved as a signal peptide; that stretch reads MTRLVTLELLMAGIGSALLCFPDCILGED. The residue at position 93 (serine 93) is a Phosphoserine. Asparagine 104, asparagine 258, and asparagine 269 each carry an N-linked (GlcNAc...) asparagine glycan. The RCL stretch occupies residues 367–394; the sequence is GTEAAAATGVKFVPMSAKLDPLIIAFDR.

The protein belongs to the serpin family. N-glycosylated. In terms of tissue distribution, liver.

Its subcellular location is the secreted. The polypeptide is Serine protease inhibitor A3N (Serpina3n) (Rattus norvegicus (Rat)).